The primary structure comprises 74 residues: Cytochrome b (74 aa).

A helical membrane pass occupies residues 34 to 54 (FGSLLAICLVTQILTGLLLAM).

Belongs to the cytochrome b family. The cytochrome bc1 complex contains 11 subunits: 3 respiratory subunits (MT-CYB, CYC1 and UQCRFS1), 2 core proteins (UQCRC1 and UQCRC2) and 6 low-molecular weight proteins (UQCRH/QCR6, UQCRB/QCR7, UQCRQ/QCR8, UQCR10/QCR9, UQCR11/QCR10 and a cleavage product of UQCRFS1). This cytochrome bc1 complex then forms a dimer. It depends on heme as a cofactor.

Its subcellular location is the mitochondrion inner membrane. Its function is as follows. Component of the ubiquinol-cytochrome c reductase complex (complex III or cytochrome b-c1 complex) that is part of the mitochondrial respiratory chain. The b-c1 complex mediates electron transfer from ubiquinol to cytochrome c. Contributes to the generation of a proton gradient across the mitochondrial membrane that is then used for ATP synthesis. This chain is Cytochrome b (MT-CYB), found in Anser caerulescens (Snow goose).